Consider the following 63-residue polypeptide: Large ribosomal subunit protein uL29 (63 aa).

The protein belongs to the universal ribosomal protein uL29 family.

This is Large ribosomal subunit protein uL29 from Bordetella petrii (strain ATCC BAA-461 / DSM 12804 / CCUG 43448).